The following is a 226-amino-acid chain: Urease accessory protein UreF (226 aa).

This sequence belongs to the UreF family. UreD, UreF and UreG form a complex that acts as a GTP-hydrolysis-dependent molecular chaperone, activating the urease apoprotein by helping to assemble the nickel containing metallocenter of UreC. The UreE protein probably delivers the nickel.

The protein localises to the cytoplasm. Its function is as follows. Required for maturation of urease via the functional incorporation of the urease nickel metallocenter. The sequence is that of Urease accessory protein UreF from Burkholderia ambifaria (strain MC40-6).